The primary structure comprises 106 residues: SH3 domain-binding glutamic acid-rich-like protein 2 (106 aa).

The SH3-binding motif lies at 61–67 (QGNPLPP).

It belongs to the SH3BGR family.

Its subcellular location is the nucleus. The polypeptide is SH3 domain-binding glutamic acid-rich-like protein 2 (sh3bgrl2) (Xenopus tropicalis (Western clawed frog)).